Consider the following 74-residue polypeptide: U-scoloptoxin(09)-Sm3a (74 aa).

The signal sequence occupies residues 1–22 (MNANSIFLCFFIMLIGCTLTHS).

Belongs to the scoloptoxin-09 family. In terms of processing, contains 3 disulfide bonds. As to expression, expressed by the venom gland.

It localises to the secreted. The chain is U-scoloptoxin(09)-Sm3a from Scolopendra morsitans (Tanzanian blue ringleg centipede).